Consider the following 367-residue polypeptide: Tetraacyldisaccharide 4'-kinase (367 aa).

68-75 (VLGGSGKT) is a binding site for ATP.

Belongs to the LpxK family.

The catalysed reaction is a lipid A disaccharide + ATP = a lipid IVA + ADP + H(+). It functions in the pathway glycolipid biosynthesis; lipid IV(A) biosynthesis; lipid IV(A) from (3R)-3-hydroxytetradecanoyl-[acyl-carrier-protein] and UDP-N-acetyl-alpha-D-glucosamine: step 6/6. Its function is as follows. Transfers the gamma-phosphate of ATP to the 4'-position of a tetraacyldisaccharide 1-phosphate intermediate (termed DS-1-P) to form tetraacyldisaccharide 1,4'-bis-phosphate (lipid IVA). In Chlamydia caviae (strain ATCC VR-813 / DSM 19441 / 03DC25 / GPIC) (Chlamydophila caviae), this protein is Tetraacyldisaccharide 4'-kinase.